The following is a 64-amino-acid chain: Probable cytochrome c oxidase subunit 5C-3 (64 aa).

The helical transmembrane segment at 15 to 34 (SVVKELVIGLTLGLAAGGLW) threads the bilayer.

This sequence belongs to the cytochrome c oxidase subunit 5C family.

The protein localises to the mitochondrion inner membrane. Its function is as follows. This protein is one of the nuclear-coded polypeptide chains of cytochrome c oxidase, the terminal oxidase in mitochondrial electron transport. The chain is Probable cytochrome c oxidase subunit 5C-3 from Arabidopsis thaliana (Mouse-ear cress).